A 217-amino-acid polypeptide reads, in one-letter code: Putative 8-oxo-dGTP diphosphatase 3 (217 aa).

A Nudix hydrolase domain is found at 30–164 (GRYGAAGLLL…PGFAASWQRL (135 aa)). The tract at residues 67–92 (LPGGARDSHETPEQTAVRESSEEAGL) is disordered. Mg(2+) contacts are provided by Gly-70, Glu-85, Glu-88, and Glu-89. The Nudix box signature appears at 70-91 (GARDSHETPEQTAVRESSEEAG).

It belongs to the Nudix hydrolase family. Mg(2+) serves as cofactor. Requires Mn(2+) as cofactor.

The catalysed reaction is 8-oxo-dGTP + H2O = 8-oxo-dGMP + diphosphate + H(+). Its function is as follows. May be involved in the GO system responsible for removing an oxidatively damaged form of guanine (7,8-dihydro-8-oxoguanine, 8-oxo-dGTP) from DNA and the nucleotide pool. 8-oxo-dGTP is inserted opposite dA and dC residues of template DNA with almost equal efficiency thus leading to A.T to G.C transversions. MutT specifically degrades 8-oxo-dGTP to the monophosphate. The chain is Putative 8-oxo-dGTP diphosphatase 3 (mutT3) from Mycobacterium tuberculosis (strain CDC 1551 / Oshkosh).